We begin with the raw amino-acid sequence, 701 residues long: Elongation factor G (701 aa).

The region spanning Gly8–Thr291 is the tr-type G domain. GTP is bound by residues Ala17 to Thr24, Asp89 to His93, and Asn143 to Asp146.

It belongs to the TRAFAC class translation factor GTPase superfamily. Classic translation factor GTPase family. EF-G/EF-2 subfamily.

It localises to the cytoplasm. Catalyzes the GTP-dependent ribosomal translocation step during translation elongation. During this step, the ribosome changes from the pre-translocational (PRE) to the post-translocational (POST) state as the newly formed A-site-bound peptidyl-tRNA and P-site-bound deacylated tRNA move to the P and E sites, respectively. Catalyzes the coordinated movement of the two tRNA molecules, the mRNA and conformational changes in the ribosome. This Pseudomonas savastanoi pv. phaseolicola (strain 1448A / Race 6) (Pseudomonas syringae pv. phaseolicola (strain 1448A / Race 6)) protein is Elongation factor G.